The sequence spans 365 residues: Transmembrane protein 25 (365 aa).

The signal sequence occupies residues 1–26 (MELPLSQATLRHTLLLLPALLSSGQG). Residues 27 to 232 (ELAPQIDGQT…APGLLATRIE (206 aa)) lie on the Extracellular side of the membrane. One can recognise an Ig-like domain in the interval 30 to 123 (PQIDGQTWAE…SGRPANASVI (94 aa)). Residues Cys52 and Cys107 are joined by a disulfide bond. Asn106, Asn162, Asn192, and Asn205 each carry an N-linked (GlcNAc...) asparagine glycan. The helical transmembrane segment at 233–253 (VPLLGIVVAGGLALGTLVGFS) threads the bilayer. Over 254–365 (TLVACLVCRK…SSVSSDEIWL (112 aa)) the chain is Cytoplasmic.

As to quaternary structure, interacts with GRIN2B. As to expression, expressed throughout the brain with higher levels within the hippocampus.

It is found in the late endosome. The protein resides in the lysosome. The protein localises to the cell membrane. It localises to the secreted. Its function is as follows. In neurons, modulates the degradation of NMDA receptor GRIN2B subunit. Plays a role in the regulation of neuronal excitability. The polypeptide is Transmembrane protein 25 (Mus musculus (Mouse)).